Reading from the N-terminus, the 437-residue chain is GTPase Der (437 aa).

EngA-type G domains are found at residues 4–168 and 177–352; these read PVVA…PAED and IRVS…QAHS. Residues 10–17, 57–61, 120–123, 183–190, 230–234, and 295–298 contribute to the GTP site; these read GRPNVGKS, DTGGI, NKAD, DTAGM, and NKWD. The 85-residue stretch at 353-437 folds into the KH-like domain; the sequence is MRIPTAVLND…PVRIWTRKKT (85 aa).

This sequence belongs to the TRAFAC class TrmE-Era-EngA-EngB-Septin-like GTPase superfamily. EngA (Der) GTPase family. In terms of assembly, associates with the 50S ribosomal subunit.

GTPase that plays an essential role in the late steps of ribosome biogenesis. In Brevibacillus brevis (strain 47 / JCM 6285 / NBRC 100599), this protein is GTPase Der.